The primary structure comprises 138 residues: Putative pre-16S rRNA nuclease (138 aa).

It belongs to the YqgF nuclease family.

Its subcellular location is the cytoplasm. Could be a nuclease involved in processing of the 5'-end of pre-16S rRNA. In Clostridium tetani (strain Massachusetts / E88), this protein is Putative pre-16S rRNA nuclease.